We begin with the raw amino-acid sequence, 59 residues long: Protein QUA-QUINE STARCH (59 aa).

In terms of tissue distribution, expressed in hypocotyls, leaves, vasculature, hydathodes, trichomes, pedicels, sepals, filaments, mature pollen, stigma papillae, styles, siliques, root and shoot tips, but not in shoot meristem, petals or root epidermis.

It localises to the cytoplasm. Functionally, involved in regulating carbon and nitrogen allocation to starch and protein. This is Protein QUA-QUINE STARCH from Arabidopsis thaliana (Mouse-ear cress).